Consider the following 355-residue polypeptide: 3-isopropylmalate dehydrogenase (355 aa).

Arg90, Arg100, Arg128, and Asp222 together coordinate substrate. Mg(2+)-binding residues include Asp222, Asp246, and Asp250. Residue 280-292 (GSAPDIAGKGIAN) participates in NAD(+) binding.

Belongs to the isocitrate and isopropylmalate dehydrogenases family. LeuB type 1 subfamily. In terms of assembly, homodimer. It depends on Mg(2+) as a cofactor. Mn(2+) is required as a cofactor.

It is found in the cytoplasm. It catalyses the reaction (2R,3S)-3-isopropylmalate + NAD(+) = 4-methyl-2-oxopentanoate + CO2 + NADH. It functions in the pathway amino-acid biosynthesis; L-leucine biosynthesis; L-leucine from 3-methyl-2-oxobutanoate: step 3/4. Catalyzes the oxidation of 3-carboxy-2-hydroxy-4-methylpentanoate (3-isopropylmalate) to 3-carboxy-4-methyl-2-oxopentanoate. The product decarboxylates to 4-methyl-2 oxopentanoate. The chain is 3-isopropylmalate dehydrogenase from Burkholderia mallei (strain ATCC 23344).